We begin with the raw amino-acid sequence, 598 residues long: Fumarate reductase flavoprotein subunit (598 aa).

Residues 12–16 (GAGGA), 36–38 (ISK), 44–52 (SHTVAAEGG), 156–158 (HFV), and aspartate 212 each bind FAD. Histidine 45 carries the post-translational modification Tele-8alpha-FAD histidine. Catalysis depends on residues histidine 233 and arginine 249. Residues 356–357 (HY), glutamate 380, and 391–397 (RLGSNSL) each bind FAD. The disordered stretch occupies residues 577–598 (AKRVYGGEATAQDKQNKEKANG).

Belongs to the FAD-dependent oxidoreductase 2 family. FRD/SDH subfamily. As to quaternary structure, part of an enzyme complex containing four subunits: a flavoprotein (FrdA), an iron-sulfur protein (FrdB), and two hydrophobic anchor proteins (FrdC and FrdD). Requires FAD as cofactor.

Its subcellular location is the cell inner membrane. The enzyme catalyses a quinone + succinate = fumarate + a quinol. It catalyses the reaction a menaquinone + succinate = a menaquinol + fumarate. Its function is as follows. Two distinct, membrane-bound, FAD-containing enzymes are responsible for the catalysis of fumarate and succinate interconversion; the fumarate reductase is used in anaerobic growth, and the succinate dehydrogenase is used in aerobic growth. This is Fumarate reductase flavoprotein subunit (frdA) from Proteus vulgaris.